The sequence spans 1085 residues: Ubiquitin carboxyl-terminal hydrolase 36 (1085 aa).

Low complexity predominate over residues 23 to 36 (GGNSSAAGSSADQA). 2 disordered regions span residues 23 to 47 (GGNS…GSLQ) and 104 to 149 (KVVG…PKPK). The USP domain maps to 173–481 (TGMINVGNTC…NAYIMFYELD (309 aa)). The active-site Nucleophile is the cysteine 182. Residue histidine 440 is the Proton acceptor of the active site. 4 disordered regions span residues 489-730 (AANR…NNSK), 745-888 (KSAD…ELLK), 963-1030 (EQRQ…FYNQ), and 1043-1085 (KFNR…QQQS). Residues 503 to 518 (STTPVPATTVSSPSPT) show a composition bias toward low complexity. Serine 514 and serine 516 each carry phosphoserine. Over residues 532–542 (GYSNGNAQKTA) the composition is skewed to polar residues. Over residues 588–609 (NGNKSSSTSSNNSSSSNHKSIN) the composition is skewed to low complexity. Residues 642-651 (MTDDHTEKPK) show a composition bias toward basic and acidic residues. Threonine 660 and threonine 664 each carry phosphothreonine. Residues serine 674 and serine 676 each carry the phosphoserine modification. Positions 705-730 (TNGHSKTNGSLTNGSASSSVHVNNSK) are enriched in polar residues. At serine 749 the chain carries Phosphoserine. The segment covering 749–758 (SDDDDDEEES) has biased composition (acidic residues). Low complexity predominate over residues 768–778 (PQKQSQSQSKA). Over residues 779-788 (PPSPKTPPSP) the composition is skewed to pro residues. Serine 781 is subject to Phosphoserine. A Phosphothreonine modification is found at threonine 784. Serine 787 carries the phosphoserine modification. Over residues 805-818 (EVDDIDDDDDEEEE) the composition is skewed to acidic residues. The span at 822-844 (KIQTPSKTHRNPFSSSKPSTDSP) shows a compositional bias: polar residues. Threonine 825 carries the phosphothreonine modification. Serine 843 bears the Phosphoserine mark. Threonine 846 carries the phosphothreonine modification. Polar residues predominate over residues 859-884 (PVKSHQQPRVGNGYQSEATSNGSTIN). Composition is skewed to low complexity over residues 987–998 (SGSAKGNNASNS) and 1056–1066 (QQQRALQRHLA).

This sequence belongs to the peptidase C19 family. In terms of assembly, interacts with atms/PAF1, but not with CycT.

It is found in the nucleus. It localises to the nucleolus. The catalysed reaction is Thiol-dependent hydrolysis of ester, thioester, amide, peptide and isopeptide bonds formed by the C-terminal Gly of ubiquitin (a 76-residue protein attached to proteins as an intracellular targeting signal).. Required for maintaining multiple types of adult stem cells, including male and female germline, epithelial follicle cell and intestinal stem cells. May function as a transcriptional repressor by continually deubiquiting histone H2B at the promoters of genes critical for cellular differentiation, thereby preventing histone H3 'Lys-4' trimethylation (H3K4). Controls selective autophagy activation by ubiquitinated proteins. The polypeptide is Ubiquitin carboxyl-terminal hydrolase 36 (Usp36) (Drosophila erecta (Fruit fly)).